Consider the following 151-residue polypeptide: Large ribosomal subunit protein bL9 (151 aa).

The protein belongs to the bacterial ribosomal protein bL9 family.

Binds to the 23S rRNA. This Dehalococcoides mccartyi (strain ATCC BAA-2266 / KCTC 15142 / 195) (Dehalococcoides ethenogenes (strain 195)) protein is Large ribosomal subunit protein bL9.